Consider the following 833-residue polypeptide: MTDSVIRIKRYYYIHILDNNTNVTRTISGPVVYTRQEHETCLFDPRPCVSVPPRHYCVVKNPCVRNEAGEVVLESSGQVKLRLGDAEIRFEGEPFPLYPGEELDSKEEQSVRKLQVIPPNTGLHVRCVRDFKDAERLVVAGTEWMVAGPQSYIPRVEVAVVEEVKATVIYPNTALLLQANVNFTDRRGVLRVAGEKWLVRTLGAYLPSVEETVVSLIQGTMLSELKALRLSAVRSFTDVYGKARRAGEQWQVTLKDAPVHIVDAYETKVAEVAAVSLNAKEYVIIHHPVDATGHNRFGETLVRRGECTFFLQPEETMPRGVEQVLVVGKEEALLLEAVCEYHDGGGKHQPGSRWMVRGPCEYIPANEVKLLEHRRVMALDRNEGIYVMNTTTGEVRAVIGKPYMLDSNEVLWEKHLPLAIEELLESPNGSIKTCERNAGFVSRREKYRIVRFNVQHNAAVQIYDYRTKKPRIVLGPSLVMLAPHEEFTVLSLSGGTPKVPNSMQSLQLFLGPRFSSDTIVVETSDHARLRLRLSYNWYFDIDRANPSQRTFSVPDFIGDCCKTIASRVRGAVAAEDFDSFHRNSAKIIRIAVFGVDEVGEAKKNLRFNANDFVVTNIDVQSAEPTDEKTRDSLQKSVQLAIEITTKSQEAAARHGNELKNQEAKGHLERQKLIDKIEVENARTKWLELQAKSEAVQASGQSIAEAKARAEALLIEVQSEMQQAEMRAKAYRISAEAELQKLQQRQALELEYTQRQNEIDVAKARAAAEAEAEKVRRMVDAIGRDTLVAIARAGPEAQVKLLGSLGLKGYLITDGNSPVNLFDAAHGMIGEPKK.

MVP repeat units follow at residues Arg10–Pro52, Arg54–Gln115, Pro119–Tyr170, Pro171–Ser223, Glu224–Asn278, Lys280–Gly328, Lys329–Asp380, and Arg381–Thr433.

In terms of assembly, the vault ribonucleoprotein particle is a huge (400 A x 670 A) cage structure of 12.9 MDa. It consists of a dimer of half-vaults, with each half-vault comprising 39 identical major vault protein (MVP) chains, PARP4 and one or more vault RNAs (vRNAs).

It localises to the cytoplasm. Its subcellular location is the nucleus. Its function is as follows. Required for normal vault structure. Vaults are multi-subunit structures that may act as scaffolds for proteins involved in signal transduction. Vaults may also play a role in nucleo-cytoplasmic transport. In Leishmania braziliensis, this protein is Major vault protein.